A 252-amino-acid chain; its full sequence is Ditrans,polycis-undecaprenyl-diphosphate synthase ((2E,6E)-farnesyl-diphosphate specific) (252 aa).

D24 is a catalytic residue. D24 lines the Mg(2+) pocket. Residues 25 to 28, W29, R37, H41, and 69 to 71 each bind substrate; these read GNGR and SSE. Residue N72 is the Proton acceptor of the active site. Positions 73, 75, and 192 each coordinate substrate. H197 lines the Mg(2+) pocket. 198–200 lines the substrate pocket; the sequence is RIS. Residue E211 participates in Mg(2+) binding.

The protein belongs to the UPP synthase family. As to quaternary structure, homodimer. Mg(2+) is required as a cofactor.

It carries out the reaction 8 isopentenyl diphosphate + (2E,6E)-farnesyl diphosphate = di-trans,octa-cis-undecaprenyl diphosphate + 8 diphosphate. Catalyzes the sequential condensation of isopentenyl diphosphate (IPP) with (2E,6E)-farnesyl diphosphate (E,E-FPP) to yield (2Z,6Z,10Z,14Z,18Z,22Z,26Z,30Z,34E,38E)-undecaprenyl diphosphate (di-trans,octa-cis-UPP). UPP is the precursor of glycosyl carrier lipid in the biosynthesis of bacterial cell wall polysaccharide components such as peptidoglycan and lipopolysaccharide. This Yersinia pestis protein is Ditrans,polycis-undecaprenyl-diphosphate synthase ((2E,6E)-farnesyl-diphosphate specific).